The sequence spans 483 residues: Glutamyl-tRNA(Gln) amidotransferase subunit A (483 aa).

Catalysis depends on charge relay system residues Lys76 and Ser151. Ser175 (acyl-ester intermediate) is an active-site residue.

The protein belongs to the amidase family. GatA subfamily. In terms of assembly, heterotrimer of A, B and C subunits.

The enzyme catalyses L-glutamyl-tRNA(Gln) + L-glutamine + ATP + H2O = L-glutaminyl-tRNA(Gln) + L-glutamate + ADP + phosphate + H(+). Allows the formation of correctly charged Gln-tRNA(Gln) through the transamidation of misacylated Glu-tRNA(Gln) in organisms which lack glutaminyl-tRNA synthetase. The reaction takes place in the presence of glutamine and ATP through an activated gamma-phospho-Glu-tRNA(Gln). The sequence is that of Glutamyl-tRNA(Gln) amidotransferase subunit A from Pseudomonas syringae pv. syringae (strain B728a).